A 210-amino-acid chain; its full sequence is Large ribosomal subunit protein bL25 (210 aa).

The tract at residues Leu-179–Gly-210 is disordered. A compositionally biased stretch (basic and acidic residues) spans Glu-201 to Gly-210.

The protein belongs to the bacterial ribosomal protein bL25 family. CTC subfamily. Part of the 50S ribosomal subunit; part of the 5S rRNA/L5/L18/L25 subcomplex. Contacts the 5S rRNA. Binds to the 5S rRNA independently of L5 and L18.

Functionally, this is one of the proteins that binds to the 5S RNA in the ribosome where it forms part of the central protuberance. This Geobacillus thermodenitrificans (strain NG80-2) protein is Large ribosomal subunit protein bL25.